The chain runs to 419 residues: Putative competence-damage inducible protein (419 aa).

It belongs to the CinA family.

The sequence is that of Putative competence-damage inducible protein from Lysinibacillus sphaericus (strain C3-41).